The primary structure comprises 424 residues: MAKFIDQVKIMLKAGKGGDGMISFRREAHVDKGGPDGGDGGTGGNIYFVADLGKNTLLSFYKNKFIIAEDGVKGGPKNLYGAKGKDTIVKVPLGTLVYKNKKIVADVIKENHLYLVAKGGKGGRGNNKFKTSKNTAPRIAENGMPGEKYEANIVLKILSDVGLVGLPSCGKSTLINALSNAKAKVAEYEFTTLVPQLGLVKYYDYSYTIADLPGLIKGASLGKGLGIQFLRHIERCKVVIHIVDFGSLDKDPIQSYEAIQKELESYKLNLTQKPQLVVANKSDLANFKNNIEKFKAKYPNIEIIEISALNYHNVENLKKIIWEFLEKTSHLQIKIEDDFETEVKEINYEPDFVIQKMNQNHFKVTGKKIEELVLKIPINTFDNLMRFNNILKKIGVWEALIKRDIQKGDLVEIYQHKFEWEEEL.

In terms of domain architecture, Obg spans 2 to 158; sequence AKFIDQVKIM…YEANIVLKIL (157 aa). In terms of domain architecture, OBG-type G spans 159-326; that stretch reads SDVGLVGLPS…LKKIIWEFLE (168 aa). GTP-binding positions include 165-172, 190-194, 211-214, 280-283, and 307-309; these read GLPSCGKS, FTTLV, DLPG, NKSD, and SAL. Mg(2+) contacts are provided by Ser-172 and Thr-192. The 79-residue stretch at 344 to 422 folds into the OCT domain; sequence KEINYEPDFV…IYQHKFEWEE (79 aa).

This sequence belongs to the TRAFAC class OBG-HflX-like GTPase superfamily. OBG GTPase family. In terms of assembly, monomer. It depends on Mg(2+) as a cofactor.

It is found in the cytoplasm. Functionally, an essential GTPase which binds GTP, GDP and possibly (p)ppGpp with moderate affinity, with high nucleotide exchange rates and a fairly low GTP hydrolysis rate. Plays a role in control of the cell cycle, stress response, ribosome biogenesis and in those bacteria that undergo differentiation, in morphogenesis control. In Mycoplasmopsis synoviae (strain 53) (Mycoplasma synoviae), this protein is GTPase Obg.